The sequence spans 325 residues: Tetraacyldisaccharide 4'-kinase (325 aa).

Residue Thr55–Thr62 coordinates ATP.

This sequence belongs to the LpxK family.

The catalysed reaction is a lipid A disaccharide + ATP = a lipid IVA + ADP + H(+). Its pathway is glycolipid biosynthesis; lipid IV(A) biosynthesis; lipid IV(A) from (3R)-3-hydroxytetradecanoyl-[acyl-carrier-protein] and UDP-N-acetyl-alpha-D-glucosamine: step 6/6. Functionally, transfers the gamma-phosphate of ATP to the 4'-position of a tetraacyldisaccharide 1-phosphate intermediate (termed DS-1-P) to form tetraacyldisaccharide 1,4'-bis-phosphate (lipid IVA). The protein is Tetraacyldisaccharide 4'-kinase of Salmonella paratyphi C (strain RKS4594).